Reading from the N-terminus, the 292-residue chain is ATP synthase gamma chain (292 aa).

The protein belongs to the ATPase gamma chain family. In terms of assembly, F-type ATPases have 2 components, CF(1) - the catalytic core - and CF(0) - the membrane proton channel. CF(1) has five subunits: alpha(3), beta(3), gamma(1), delta(1), epsilon(1). CF(0) has three main subunits: a, b and c.

It localises to the cell inner membrane. Its function is as follows. Produces ATP from ADP in the presence of a proton gradient across the membrane. The gamma chain is believed to be important in regulating ATPase activity and the flow of protons through the CF(0) complex. This Methylobacterium nodulans (strain LMG 21967 / CNCM I-2342 / ORS 2060) protein is ATP synthase gamma chain.